A 450-amino-acid chain; its full sequence is Ammonium transporter Rh type A (450 aa).

The Cytoplasmic portion of the chain corresponds to 1 to 4 (MRFK). Residues 5–25 (FSLIALSLEVVMIVSFALFVE) traverse the membrane as a helical segment. Residues 26 to 72 (YETSQNGSQKSASQQNASQQNAAAQQNASQQGNASSPAKEDQFFQLY) are Extracellular-facing. N31, N41, N52, and N58 each carry an N-linked (GlcNAc...) asparagine glycan. Residues 34–61 (QKSASQQNASQQNAAAQQNASQQGNASS) are disordered. The chain crosses the membrane as a helical span at residues 73–93 (PLFQHVHVMIFVGFGFLMTFL). Residues 94–97 (KKYG) are Cytoplasmic-facing. A helical membrane pass occupies residues 98–118 (FSGVGFNLFLAALGLQWGTIV). At 119–134 (QGLLHSHGLKFPFRIK) the chain is on the extracellular side. The helical transmembrane segment at 135–155 (NMINADFSTATVLISFGAVLG) threads the bilayer. At 156 to 159 (KTSP) the chain is on the cytoplasmic side. A helical transmembrane segment spans residues 160–180 (IQMIIMTILEIAVFAGNEHLV). The Extracellular portion of the chain corresponds to 181 to 189 (TEIFKASDT). A helical transmembrane segment spans residues 190 to 210 (GASMTIHAFGAYFGLAVAGVL). Residues 211–229 (YRSGLKHGHPNEESVYHSD) are Cytoplasmic-facing. The helical transmembrane segment at 230 to 250 (LFAMIGTLFLWMFWPSFNSAI) threads the bilayer. Over 251–260 (AQPENNQYRA) the chain is Extracellular. The chain crosses the membrane as a helical span at residues 261–281 (IVNTYMSLAACVITAYALSSL). At 282 to 289 (VERRGRLD) the chain is on the cytoplasmic side. The helical transmembrane segment at 290–307 (MVHIQNATLAGGVAVGTC) threads the bilayer. At 308 to 311 (ADME) the chain is on the extracellular side. A helical transmembrane segment spans residues 312-332 (IPLYFAMTIGSIAGIISVLGY). Over 333–349 (KFLSPLLAHKLMIHDTC) the chain is Cytoplasmic. Residues 350–370 (GVHNLHGLPGVFGGLASIVAI) form a helical membrane-spanning segment. Residues 371–384 (SWGKSTVSTMAMQA) lie on the Extracellular side of the membrane. The helical transmembrane segment at 385–405 (TALGSSIGSAIVGGLVTGLIL) threads the bilayer. The Cytoplasmic portion of the chain corresponds to 406–450 (KLPVWNQPPDEYCFDDSVSWKVPKYRELDNYFFQHVTHNHVEHEV).

The protein belongs to the ammonium transporter (TC 2.A.49) family. Rh subfamily. Homodimer. Heterotrimer; a RHCE monomer interacts with a RHAG homodimer. Component of the ankyrin-1 complex in the erythrocyte, composed of ANK1, RHCE, RHAG, SLC4A1, EPB42, GYPA, GYPB and AQP1. Interacts with GYPB (via the N-terminal); this interaction bridges the (RHAG)2(RHCE) heterotrimer with the SLC4A1 Band 3 I dimer complexed with GYPA. Post-translationally, glycosylated.

The protein localises to the membrane. It carries out the reaction methylamine(out) = methylamine(in). The catalysed reaction is NH4(+)(in) = NH4(+)(out). It catalyses the reaction CO2(out) = CO2(in). Its function is as follows. Component of the ankyrin-1 complex, a multiprotein complex involved in the stability and shape of the erythrocyte membrane. Heterotrimer with RHCE (RHAG)2(RHCE), that transports ammonium and its related derivative methylammonium, in both neutral and ionic forms, across the erythrocyte membrane. The transport of NH4(+) is electrogenic and masks the NH3 transport. Also, may act as a CO2 channel. Moreover in erythrocyte, regulates RHD membrane expression and is associated with rhesus blood group antigen expression. This chain is Ammonium transporter Rh type A, found in Rattus norvegicus (Rat).